A 179-amino-acid polypeptide reads, in one-letter code: Repressor of phase 1 flagellin gene (179 aa).

Transcriptional repressor of the FliC phase-1 flagellin. This chain is Repressor of phase 1 flagellin gene (fljA), found in Salmonella abony.